Reading from the N-terminus, the 261-residue chain is Cytochrome c oxidase subunit 3 (261 aa).

Residues 1 to 15 (MTHQTHAYHMVDPSP) lie on the Mitochondrial matrix side of the membrane. A helical membrane pass occupies residues 16-34 (WPLTGALSALLMTSGLTMW). Residues 35–40 (FHYHSV) are Mitochondrial intermembrane-facing. The helical transmembrane segment at 41–66 (VLLFLGLMTNTLTMFQWWRDVVREGT) threads the bilayer. The Mitochondrial matrix portion of the chain corresponds to 67–72 (FQGHHT). Residues 73–105 (PVVQEGLRYGMILFITSEVLFFTGFFWAFYHSS) traverse the membrane as a helical segment. The Mitochondrial intermembrane portion of the chain corresponds to 106–128 (LAPTPELGSYWPPVGVYPLNPLE). Residues 129-152 (VPLLNTSVLLASGVTITWAHHSLM) traverse the membrane as a helical segment. The Mitochondrial matrix portion of the chain corresponds to 153–155 (EGN). The helical transmembrane segment at 156–183 (RKNMLQALLITILLGVYFTLLQMFEYYE) threads the bilayer. At 184 to 190 (ASFTISD) the chain is on the mitochondrial intermembrane side. The chain crosses the membrane as a helical span at residues 191-223 (GIYGSTFFVTTGFHGLHVIIGSTFLLTCFIRQL). The Mitochondrial matrix portion of the chain corresponds to 224–232 (KFHFTSNHH). A helical transmembrane segment spans residues 233–256 (FGFEAAAWYWHFVDVVWLFLYLSI). The Mitochondrial intermembrane portion of the chain corresponds to 257-261 (YWWGS).

The protein belongs to the cytochrome c oxidase subunit 3 family. As to quaternary structure, component of the cytochrome c oxidase (complex IV, CIV), a multisubunit enzyme composed of 14 subunits. The complex is composed of a catalytic core of 3 subunits MT-CO1, MT-CO2 and MT-CO3, encoded in the mitochondrial DNA, and 11 supernumerary subunits COX4I, COX5A, COX5B, COX6A, COX6B, COX6C, COX7A, COX7B, COX7C, COX8 and NDUFA4, which are encoded in the nuclear genome. The complex exists as a monomer or a dimer and forms supercomplexes (SCs) in the inner mitochondrial membrane with NADH-ubiquinone oxidoreductase (complex I, CI) and ubiquinol-cytochrome c oxidoreductase (cytochrome b-c1 complex, complex III, CIII), resulting in different assemblies (supercomplex SCI(1)III(2)IV(1) and megacomplex MCI(2)III(2)IV(2)).

The protein resides in the mitochondrion inner membrane. The enzyme catalyses 4 Fe(II)-[cytochrome c] + O2 + 8 H(+)(in) = 4 Fe(III)-[cytochrome c] + 2 H2O + 4 H(+)(out). Functionally, component of the cytochrome c oxidase, the last enzyme in the mitochondrial electron transport chain which drives oxidative phosphorylation. The respiratory chain contains 3 multisubunit complexes succinate dehydrogenase (complex II, CII), ubiquinol-cytochrome c oxidoreductase (cytochrome b-c1 complex, complex III, CIII) and cytochrome c oxidase (complex IV, CIV), that cooperate to transfer electrons derived from NADH and succinate to molecular oxygen, creating an electrochemical gradient over the inner membrane that drives transmembrane transport and the ATP synthase. Cytochrome c oxidase is the component of the respiratory chain that catalyzes the reduction of oxygen to water. Electrons originating from reduced cytochrome c in the intermembrane space (IMS) are transferred via the dinuclear copper A center (CU(A)) of subunit 2 and heme A of subunit 1 to the active site in subunit 1, a binuclear center (BNC) formed by heme A3 and copper B (CU(B)). The BNC reduces molecular oxygen to 2 water molecules using 4 electrons from cytochrome c in the IMS and 4 protons from the mitochondrial matrix. This is Cytochrome c oxidase subunit 3 (MT-CO3) from Mammuthus primigenius (Siberian woolly mammoth).